The chain runs to 282 residues: Centromere protein P (282 aa).

A coiled-coil region spans residues 1–80 (MEQKYEEDIQ…KDLRRQTEIN (80 aa)).

This sequence belongs to the CENP-P/CTF19 family.

The protein resides in the nucleus. It is found in the chromosome. Its subcellular location is the centromere. Functionally, probable component of a centromeric complex involved in assembly of kinetochore proteins, mitotic progression and chromosome segregation. The chain is Centromere protein P (cenpp) from Danio rerio (Zebrafish).